Consider the following 382-residue polypeptide: Carbamoyl phosphate synthase small chain (382 aa).

The CPSase stretch occupies residues 1 to 189 (MIKSALLVLE…ELPAAKNESE (189 aa)). L-glutamine is bound by residues Ser-47, Gly-241, and Gly-243. A Glutamine amidotransferase type-1 domain is found at 193 to 380 (HVVAYDYGVK…IDLIQTYRSS (188 aa)). Cys-269 (nucleophile) is an active-site residue. Leu-270, Gln-273, Asn-311, Gly-313, and Phe-314 together coordinate L-glutamine. Catalysis depends on residues His-353 and Glu-355.

This sequence belongs to the CarA family. As to quaternary structure, composed of two chains; the small (or glutamine) chain promotes the hydrolysis of glutamine to ammonia, which is used by the large (or ammonia) chain to synthesize carbamoyl phosphate. Tetramer of heterodimers (alpha,beta)4.

It catalyses the reaction hydrogencarbonate + L-glutamine + 2 ATP + H2O = carbamoyl phosphate + L-glutamate + 2 ADP + phosphate + 2 H(+). The enzyme catalyses L-glutamine + H2O = L-glutamate + NH4(+). Its pathway is amino-acid biosynthesis; L-arginine biosynthesis; carbamoyl phosphate from bicarbonate: step 1/1. It participates in pyrimidine metabolism; UMP biosynthesis via de novo pathway; (S)-dihydroorotate from bicarbonate: step 1/3. Small subunit of the glutamine-dependent carbamoyl phosphate synthetase (CPSase). CPSase catalyzes the formation of carbamoyl phosphate from the ammonia moiety of glutamine, carbonate, and phosphate donated by ATP, constituting the first step of 2 biosynthetic pathways, one leading to arginine and/or urea and the other to pyrimidine nucleotides. The small subunit (glutamine amidotransferase) binds and cleaves glutamine to supply the large subunit with the substrate ammonia. The sequence is that of Carbamoyl phosphate synthase small chain from Pectobacterium atrosepticum (strain SCRI 1043 / ATCC BAA-672) (Erwinia carotovora subsp. atroseptica).